We begin with the raw amino-acid sequence, 236 residues long: Small ribosomal subunit protein uS2c (236 aa).

Belongs to the universal ribosomal protein uS2 family.

Its subcellular location is the plastid. It is found in the chloroplast. The polypeptide is Small ribosomal subunit protein uS2c (rps2) (Lotus japonicus (Lotus corniculatus var. japonicus)).